The following is a 551-amino-acid chain: Scaffold protein OPG125 (551 aa).

This sequence belongs to the orthopoxvirus protein OPG125 family. In terms of assembly, interacts with the late transcription elongation factor VLTF-4/OPG110. Interacts with the late transcription factors VLTF-1.

Its subcellular location is the membrane. Functionally, acts with RNA polymerase to initiate transcription from late gene promoters. The chain is Scaffold protein OPG125 (OPG125) from Monkeypox virus.